The sequence spans 392 residues: Norsolorinic acid reductase B (392 aa).

D75 lines the NADP(+) pocket. Y80 serves as the catalytic Proton donor. NADP(+) contacts are provided by residues 184 to 185 (SD), Q210, 239 to 249 (GTLGQGSFQTE), and 311 to 319 (RKLEHIQGN). The segment at 242–263 (GQGSFQTEEGRKQREKDNPGRK) is disordered. Residues 249–261 (EEGRKQREKDNPG) are compositionally biased toward basic and acidic residues.

Belongs to the aldo/keto reductase family. Aldo/keto reductase 2 subfamily.

It participates in mycotoxin biosynthesis. Norsolorinic acid reductase; part of the fragmented gene cluster that mediates the biosynthesis of dothistromin (DOTH), a polyketide toxin very similar in structure to the aflatoxin precursor, versicolorin B. The first step of the pathway is the conversion of acetate to norsolorinic acid (NOR) and requires the fatty acid synthase subunits hexA and hexB, as well as the polyketide synthase pksA. PksA combines a hexanoyl starter unit and 7 malonyl-CoA extender units to synthesize the precursor NOR. The hexanoyl starter unit is provided to the acyl-carrier protein (ACP) domain by the fungal fatty acid synthase hexA/hexB. The second step is the conversion of NOR to averantin (AVN) and requires the norsolorinic acid ketoreductase nor1, which catalyzes the dehydration of norsolorinic acid to form (1'S)-averantin. The cytochrome P450 monooxygenase avnA then catalyzes the hydroxylation of AVN to 5'hydroxyaverantin (HAVN). The next step is performed by adhA that transforms HAVN to averufin (AVF). Averufin might then be converted to hydroxyversicolorone by cypX and avfA. Hydroxyversicolorone is further converted versiconal hemiacetal acetate (VHA) by moxY. VHA is then the substrate for the versiconal hemiacetal acetate esterase est1 to yield versiconal (VAL). Versicolorin B synthase vbsA then converts VAL to versicolorin B (VERB) by closing the bisfuran ring. Then, the activity of the versicolorin B desaturase verB leads to versicolorin A (VERA). DotB, a predicted chloroperoxidase, may perform epoxidation of the A-ring of VERA. Alternatively, a cytochrome P450, such as cypX or avnA could catalyze this step. It is also possible that another, uncharacterized, cytochrome P450 enzyme is responsible for this step. Opening of the epoxide could potentially be achieved by the epoxide hydrolase epoA. However, epoA seems not to be required for DOTH biosynthesis, but other epoxide hydrolases may have the ability to complement this hydrolysis. Alternatively, opening of the epoxide ring could be achieved non-enzymatically. The next step is the deoxygenation of ring A to yield the 5,8-dihydroxyanthraquinone which is most likely catalyzed by the NADPH dehydrogenase encoded by ver1. The last stages of DOTH biosynthesis are proposed to involve hydroxylation of the bisfuran. OrdB and norB might have oxidative roles here. An alternative possibility is that cytochrome P450 monoogenases such as avnA and cypX might perform these steps in addition to previously proposed steps. This Dothistroma septosporum (strain NZE10 / CBS 128990) (Red band needle blight fungus) protein is Norsolorinic acid reductase B.